A 461-amino-acid chain; its full sequence is Serine/threonine-protein kinase ppk24, mitochondrial (461 aa).

The Protein kinase domain maps to 120 to 416 (FQHLKSIAKG…LDSILGTAWV (297 aa)). Residues 126–134 (IAKGATSTI) and Lys-153 contribute to the ATP site. Catalysis depends on Asp-256, which acts as the Proton acceptor.

It belongs to the protein kinase superfamily. Ser/Thr protein kinase family.

It is found in the mitochondrion. It catalyses the reaction L-seryl-[protein] + ATP = O-phospho-L-seryl-[protein] + ADP + H(+). It carries out the reaction L-threonyl-[protein] + ATP = O-phospho-L-threonyl-[protein] + ADP + H(+). In terms of biological role, has a role late in meiosis. This chain is Serine/threonine-protein kinase ppk24, mitochondrial (ppk24), found in Schizosaccharomyces pombe (strain 972 / ATCC 24843) (Fission yeast).